A 167-amino-acid polypeptide reads, in one-letter code: Signal peptidase complex catalytic subunit SEC11 (167 aa).

At 1 to 12 the chain is on the cytoplasmic side; the sequence is MNLRLELTRFLK. A helical; Signal-anchor for type II membrane protein transmembrane segment spans residues 13–30; that stretch reads LCFVLSSAFMFWKGLSIA. Over 31 to 167 the chain is Lumenal; that stretch reads TNSHSPIVVV…LGISALLSNE (137 aa). Residues S44, H83, and D109 each act as charge relay system in the active site. The C-terminal short (CTS) helix stretch occupies residues 153-164; sequence ALMGFLGISALL.

Belongs to the peptidase S26B family. As to quaternary structure, component of the signal peptidase complex (SPC) composed of a catalytic subunit SEC11 and three accessory subunits SPC1, SPC2 and SPC3. The complex induces a local thinning of the ER membrane which is used to measure the length of the signal peptide (SP) h-region of protein substrates. This ensures the selectivity of the complex towards h-regions shorter than 18-20 amino acids. SPC associates with the translocon complex.

It localises to the endoplasmic reticulum membrane. It catalyses the reaction Cleavage of hydrophobic, N-terminal signal or leader sequences from secreted and periplasmic proteins.. Catalytic component of the signal peptidase complex (SPC) which catalyzes the cleavage of N-terminal signal sequences from nascent proteins as they are translocated into the lumen of the endoplasmic reticulum. Specifically cleaves N-terminal signal peptides that contain a hydrophobic alpha-helix (h-region) shorter than 18-20 amino acids. The polypeptide is Signal peptidase complex catalytic subunit SEC11 (SEC11) (Zygosaccharomyces rouxii (strain ATCC 2623 / CBS 732 / NBRC 1130 / NCYC 568 / NRRL Y-229)).